The following is a 286-amino-acid chain: Probable alpha-ketoglutarate-dependent hypophosphite dioxygenase (286 aa).

This sequence belongs to the PhyH family.

Its function is as follows. Required for hypophosphite oxidation. The chain is Probable alpha-ketoglutarate-dependent hypophosphite dioxygenase (htxA) from Stutzerimonas stutzeri (Pseudomonas stutzeri).